Consider the following 507-residue polypeptide: Chromosomal replication initiator protein DnaA (507 aa).

A domain I, interacts with DnaA modulators region spans residues M1 to T112. The segment at R99–P155 is disordered. Residues V113–T127 show a composition bias toward polar residues. Positions V113–T166 are domain II. Residues S167 to A383 are domain III, AAA+ region. ATP contacts are provided by G211, G213, K214, and T215. Positions S384 to R507 are domain IV, binds dsDNA.

It belongs to the DnaA family. As to quaternary structure, oligomerizes as a right-handed, spiral filament on DNA at oriC.

The protein localises to the cytoplasm. Plays an essential role in the initiation and regulation of chromosomal replication. ATP-DnaA binds to the origin of replication (oriC) to initiate formation of the DNA replication initiation complex once per cell cycle. Binds the DnaA box (a 9 base pair repeat at the origin) and separates the double-stranded (ds)DNA. Forms a right-handed helical filament on oriC DNA; dsDNA binds to the exterior of the filament while single-stranded (ss)DNA is stabiized in the filament's interior. The ATP-DnaA-oriC complex binds and stabilizes one strand of the AT-rich DNA unwinding element (DUE), permitting loading of DNA polymerase. After initiation quickly degrades to an ADP-DnaA complex that is not apt for DNA replication. Binds acidic phospholipids. The chain is Chromosomal replication initiator protein DnaA from Mycobacterium tuberculosis (strain ATCC 25177 / H37Ra).